A 907-amino-acid polypeptide reads, in one-letter code: Chloride channel protein 2 (907 aa).

The Cytoplasmic portion of the chain corresponds to 1-93 (MAAATAAAAT…RCHKFLVSRV (93 aa)). The tract at residues 22-40 (QYEQTLMYGRYTQELGAFA) is essential for channel gating by both voltage and cell volume. At T26 the chain carries Phosphothreonine. The modulates channel gating by both voltage and cell volume stretch occupies residues 42-55 (EEAARIRLGGPEPW). The next 2 helical transmembrane spans lie at 94 to 127 (GEDWIFLVLLGLLMALVSWAMDYAIAVCLQAQQW) and 136 to 161 (ILLQYLAWVTYPVVLITFSAGFTQIL). Residues 167–171 (GSGIP) carry the Selectivity filter part_1 motif. An intramembrane region (helical) is located at residues 170–177 (IPEMKTIL). 2 helical membrane-spanning segments follow: residues 186-204 (LTLKTFVAKVIGLTCALGS) and 211-229 (EGPFVHIASMCAALLSKFL). The short motif at 209-213 (GKEGP) is the Selectivity filter part_2 element. Intramembrane regions (helical) lie at residues 245 to 257 (MLAAACAVGVGCC) and 261 to 269 (PIGGVLFSI). The next 5 helical transmembrane spans lie at 281-301 (YWRGFFAATFSAFIFRVLAVW), 327-355 (LPAFAVIGIASGFGGALFVYLNRKIVQVM), 364-383 (FLMKKRLLFPALVTLLISTL), 435-455 (ANVFLTLVIFILMKFWMSALA), and 463-486 (GAFMPVFVIGAAFGRLVGESMAAW). Positions 463-467 (GAFMP) match the Selectivity filter part_3 motif. The segment at residues 503 to 517 (GGYAVVGAAALAGAV) is an intramembrane region (helical). Positions 518–519 (TH) form an intramembrane region, note=Loop between two helices. The segment at residues 520-531 (TVSTAVIVFELT) is an intramembrane region (helical). Residues 532–536 (GQIAH) constitute an intramembrane region (note=Loop between two helices). Residues 537–554 (ILPVMIAVILANAVAQSL) traverse the membrane as a helical segment. The Cytoplasmic segment spans residues 555-907 (QPSLYDSIIR…TPSDSDDKCQ (353 aa)). Residues 590–648 (MVRDVPHVALSCTFRDLRLALHRTKGRMLALVESPESMILLGSIERSQVVALLGAQLSP) enclose the CBS 1 domain. Positions 650 to 660 (RRRQHMQKLRK) are enriched in basic residues. A disordered region spans residues 650–720 (RRRQHMQKLR…NATSLQEGTT (71 aa)). Over residues 664–678 (SPPSDQESPPSSETS) the composition is skewed to low complexity. Residues 696–705 (QTHKPLKPAL) show a composition bias toward basic residues. Over residues 710–720 (SNATSLQEGTT) the composition is skewed to polar residues. The residue at position 767 (S767) is a Phosphoserine. The CBS 2 domain occupies 799–859 (IDPAPFQLVE…GSVTAQGVKV (61 aa)). Positions 821–822 (LL) match the Basolateral membrane sorting motif. The disordered stretch occupies residues 865–907 (SFRDSATSSSDTETTEVHALWGPRSRHGLPREGTPSDSDDKCQ).

Belongs to the chloride channel (TC 2.A.49) family. ClC-2/CLCN2 subfamily. As to quaternary structure, homodimer. Interacts with auxiliary subunit HEPACAM. Phosphorylated. Activated by dephosphorylation. As to expression, ubiquitously expressed. Expressed in neurons and glial cells (at protein level).

It localises to the cell membrane. The protein localises to the basolateral cell membrane. It is found in the cell projection. The protein resides in the dendritic spine membrane. Its subcellular location is the axon. It carries out the reaction chloride(in) = chloride(out). It catalyses the reaction thiocyanate(in) = thiocyanate(out). The enzyme catalyses bromide(in) = bromide(out). The catalysed reaction is nitrate(in) = nitrate(out). It carries out the reaction iodide(out) = iodide(in). Its activity is regulated as follows. Common gate kinetics are down-regulated by intracellular ATP. Inhibited by AK-42, a derivative of meclofenamate. Inhibited by Cd(2+). Inhibited by Zn(2+) and PKC activation. Inhibited at acidic pH. CCLN2:HEPACAM channel conductance is up-regulated upon hypo-osmolarity. Functionally, voltage-gated and osmosensitive chloride channel. Forms a homodimeric channel where each subunit has its own ion conduction pathway. Conducts double-barreled currents controlled by two types of gates, two fast glutamate gates that control each subunit independently and a slow common gate that opens and shuts off both subunits simultaneously. Displays inward rectification currents activated upon membrane hyperpolarization and extracellular hypotonicity. Contributes to chloride conductance involved in neuron excitability. In hippocampal neurons, generates a significant part of resting membrane conductance and provides an additional chloride efflux pathway to prevent chloride accumulation in dendrites upon GABA receptor activation. In glia, associates with the auxiliary subunit HEPACAM/GlialCAM at astrocytic processes and myelinated fiber tracts where it may regulate transcellular chloride flux buffering extracellular chloride and potassium concentrations. Regulates aldosterone production in adrenal glands. The opening of CLCN2 channels at hyperpolarized membrane potentials in the glomerulosa causes cell membrane depolarization, activation of voltage-gated calcium channels and increased expression of aldosterone synthase, the rate-limiting enzyme for aldosterone biosynthesis. Contributes to chloride conductance in retinal pigment epithelium involved in phagocytosis of shed photoreceptor outer segments and photoreceptor renewal. Conducts chloride currents at the basolateral membrane of epithelial cells with a role in chloride reabsorption rather than secretion. Permeable to small monovalent anions with chloride &gt; thiocyanate &gt; bromide &gt; nitrate &gt; iodide ion selectivity. The protein is Chloride channel protein 2 (Clcn2) of Rattus norvegicus (Rat).